The following is a 198-amino-acid chain: ATP-dependent Clp protease proteolytic subunit (198 aa).

The active-site Nucleophile is serine 98. Residue histidine 123 is part of the active site.

The protein belongs to the peptidase S14 family. In terms of assembly, fourteen ClpP subunits assemble into 2 heptameric rings which stack back to back to give a disk-like structure with a central cavity, resembling the structure of eukaryotic proteasomes.

Its subcellular location is the cytoplasm. It catalyses the reaction Hydrolysis of proteins to small peptides in the presence of ATP and magnesium. alpha-casein is the usual test substrate. In the absence of ATP, only oligopeptides shorter than five residues are hydrolyzed (such as succinyl-Leu-Tyr-|-NHMec, and Leu-Tyr-Leu-|-Tyr-Trp, in which cleavage of the -Tyr-|-Leu- and -Tyr-|-Trp bonds also occurs).. In terms of biological role, cleaves peptides in various proteins in a process that requires ATP hydrolysis. Has a chymotrypsin-like activity. Plays a major role in the degradation of misfolded proteins. The polypeptide is ATP-dependent Clp protease proteolytic subunit (Halothermothrix orenii (strain H 168 / OCM 544 / DSM 9562)).